A 291-amino-acid chain; its full sequence is N-acetylmannosamine kinase (291 aa).

ATP-binding positions include 5–12 (AIDIGGTK) and 132–139 (GVGGGVVC). Zn(2+) is bound by residues His-156, Cys-166, Cys-168, and Cys-173.

Belongs to the ROK (NagC/XylR) family. NanK subfamily. Homodimer.

It catalyses the reaction an N-acyl-D-mannosamine + ATP = an N-acyl-D-mannosamine 6-phosphate + ADP + H(+). It functions in the pathway amino-sugar metabolism; N-acetylneuraminate degradation; D-fructose 6-phosphate from N-acetylneuraminate: step 2/5. Catalyzes the phosphorylation of N-acetylmannosamine (ManNAc) to ManNAc-6-P. The protein is N-acetylmannosamine kinase of Salmonella paratyphi A (strain ATCC 9150 / SARB42).